The sequence spans 206 residues: Ion-translocating oxidoreductase complex subunit G (206 aa).

A helical transmembrane segment spans residues 9–29; that stretch reads GITLALFAAGSTGLTAAINQM. T174 is modified (FMN phosphoryl threonine).

Belongs to the RnfG family. The complex is composed of six subunits: RsxA, RsxB, RsxC, RsxD, RsxE and RsxG. Requires FMN as cofactor.

It is found in the cell inner membrane. Its function is as follows. Part of a membrane-bound complex that couples electron transfer with translocation of ions across the membrane. Required to maintain the reduced state of SoxR. Probably transfers electron from NAD(P)H to SoxR. In Escherichia coli (strain K12), this protein is Ion-translocating oxidoreductase complex subunit G.